A 342-amino-acid polypeptide reads, in one-letter code: D-erythrose-4-phosphate dehydrogenase (342 aa).

An NAD(+)-binding site is contributed by 11–12 (RV). Substrate contacts are provided by residues 153–155 (SCT), Arg199, 212–213 (TK), and Arg235. Catalysis depends on Cys154, which acts as the Nucleophile. Asn317 contacts NAD(+).

This sequence belongs to the glyceraldehyde-3-phosphate dehydrogenase family. Epd subfamily. Homotetramer.

The protein resides in the cytoplasm. The enzyme catalyses D-erythrose 4-phosphate + NAD(+) + H2O = 4-phospho-D-erythronate + NADH + 2 H(+). It participates in cofactor biosynthesis; pyridoxine 5'-phosphate biosynthesis; pyridoxine 5'-phosphate from D-erythrose 4-phosphate: step 1/5. In terms of biological role, catalyzes the NAD-dependent conversion of D-erythrose 4-phosphate to 4-phosphoerythronate. The chain is D-erythrose-4-phosphate dehydrogenase from Pseudoalteromonas atlantica (strain T6c / ATCC BAA-1087).